Here is a 143-residue protein sequence, read N- to C-terminus: MSSFPILHLLLLLLGCQVPQAQGRPFSTDLPKQYFTMINEIMEMLNKSPSPSEEPLDSNEKETLLEDTLLRPNLDVFLNASSKFHKNGLLIWNNLKEFLPLLPTPTPRGEPISIMENNWGDFQRKLKKYLEALDNFLNFKNKP.

Positions 1 to 23 are cleaved as a signal peptide; it reads MSSFPILHLLLLLLGCQVPQAQG. Residue asparagine 79 is glycosylated (N-linked (GlcNAc...) asparagine).

This sequence belongs to the IL-3 family. In terms of assembly, monomer.

It is found in the secreted. Granulocyte/macrophage colony-stimulating factors are cytokines that act in hematopoiesis by controlling the production, differentiation, and function of 2 related white cell populations of the blood, the granulocytes and the monocytes-macrophages. In terms of biological role, this CSF induces granulocytes, macrophages, mast cells, stem cells, erythroid cells, eosinophils and megakaryocytes. The chain is Interleukin-3 (IL3) from Canis lupus familiaris (Dog).